The primary structure comprises 200 residues: MLAFCRSSLKSKKYIIILLALAAIAGLGTHAAWSSNGLPRIDNKTLARLAQQHPVVVLFRHAERCDRSTNQCLSDKTGITVKGTQDARELGNAFSADIPDFDLYSSNTVRTIQSATWFSAGKKLTVDKRLLQCGNEIYSAIKDLQSKAPDKNIVIFTHNHCLTYIAKDKRDATFKPDYLDGLVMHVEKGKVYLDGEFVNH.

The first 25 residues, 1–25 (MLAFCRSSLKSKKYIIILLALAAIA), serve as a signal peptide directing secretion.

Belongs to the phosphoglycerate mutase family. Ais subfamily.

Its subcellular location is the periplasm. It participates in bacterial outer membrane biogenesis; lipopolysaccharide metabolism. Catalyzes the dephosphorylation of heptose(II) of the outer membrane lipopolysaccharide core. This Escherichia coli (strain ATCC 8739 / DSM 1576 / NBRC 3972 / NCIMB 8545 / WDCM 00012 / Crooks) protein is Lipopolysaccharide core heptose(II)-phosphate phosphatase.